A 161-amino-acid polypeptide reads, in one-letter code: GANAAPQGQGKVTFNGTVVDAPCGIDAQSADQSIEFGQVSKVLLNNGGSSTPKNFDIKLTDCDVTNYKKAGKAGTVSLTFSGVQAGTDMLQTVGTTGTAILVKDPHGKAVKFDGATATGVSSLVDGDNTIHFTALVKKDTSGNDVAEGAFSAVANFNLIYQ.

This sequence belongs to the fimbrial protein family.

Its subcellular location is the secreted. It localises to the fimbrium. Fimbriae (also called pili), polar filaments radiating from the surface of the bacterium to a length of 0.5-1.5 micrometers and numbering 100-300 per cell, enable bacteria to colonize the epithelium of specific host organs. This is PRS fimbrial major pilin protein (prsA) from Escherichia coli.